A 271-amino-acid polypeptide reads, in one-letter code: MQQNKKLGQCFLKDKNIVKKAINAANINKNDIVLEIGLGKGILTKELAKQCKKVIVIELDKKLEIFWEDIIKEYPNVEIIWNDALKVNLKELGFNKVVANLPYQISSPITFKLLDCDFEVAVLMYQYEFAKRMGAPSGTKEYSRLSVSVQYRAVVDYVCKVSPSAFSPKPKVDSAIVKITKKNEPIHNIDNWEFFDGFNRALFQHRNKNTKKALIHSAHEINMDRDKLKELLNSNEIMEFNDLLGKKVYTLSLKEIGVLCNNLYKIINKSK.

S-adenosyl-L-methionine contacts are provided by Leu-12, Gly-37, Glu-58, Asp-83, and Asn-100.

This sequence belongs to the class I-like SAM-binding methyltransferase superfamily. rRNA adenine N(6)-methyltransferase family. RsmA subfamily.

It is found in the cytoplasm. Specifically dimethylates two adjacent adenosines in the loop of a conserved hairpin near the 3'-end of 16S rRNA in the 30S particle. May play a critical role in biogenesis of 30S subunits. The sequence is that of Probable ribosomal RNA small subunit methyltransferase A from Methanococcus aeolicus (strain ATCC BAA-1280 / DSM 17508 / OCM 812 / Nankai-3).